A 698-amino-acid chain; its full sequence is Glycine--tRNA ligase beta subunit (698 aa).

It belongs to the class-II aminoacyl-tRNA synthetase family. Tetramer of two alpha and two beta subunits.

The protein resides in the cytoplasm. It catalyses the reaction tRNA(Gly) + glycine + ATP = glycyl-tRNA(Gly) + AMP + diphosphate. In Xanthomonas campestris pv. campestris (strain B100), this protein is Glycine--tRNA ligase beta subunit.